A 93-amino-acid polypeptide reads, in one-letter code: ATP-dependent Clp protease adapter protein ClpS (93 aa).

It belongs to the ClpS family. As to quaternary structure, binds to the N-terminal domain of the chaperone ClpA.

Involved in the modulation of the specificity of the ClpAP-mediated ATP-dependent protein degradation. In Gloeobacter violaceus (strain ATCC 29082 / PCC 7421), this protein is ATP-dependent Clp protease adapter protein ClpS.